A 376-amino-acid polypeptide reads, in one-letter code: MSKRDYYEVLGVARGASDEELKKAYRRCAMKYHPDRNPGDAAAEATFKECKEAYEVLSDGNKRRAYDAHGHAAFEHGMGGGGGGPGGPDMGDIFGDIFGNIFGGGAAGPRAARRGADVGYVLELDLEEAVAGIERRIEIPTLIECEPCHGSGSEDGKVEVCATCHGRGQVRIQRGIFAMQQSCPHCDGRGTLIQNPCKTCHGAGRVEEDKVLSIKVPAGVDTGDRIRLAGEGEAGPAGTPPGDLYVEVRVREHAIFQRDGDDLHCEVPIRISQAALGDTVRVATLGGEAEIRIPAETQTGKLFRLRGKGVRSVRSRSEGDLYCRVVVETPVNLTTDQRELLKQFEATFTGEDARKHSPKSATFIDGVKGFWDRMTS.

A J domain is found at 5-70 (DYYEVLGVAR…NKRRAYDAHG (66 aa)). Residues 132 to 209 (GIERRIEIPT…CHGAGRVEED (78 aa)) form a CR-type zinc finger. Zn(2+)-binding residues include Cys-145, Cys-148, Cys-161, Cys-164, Cys-183, Cys-186, Cys-197, and Cys-200. CXXCXGXG motif repeat units lie at residues 145–152 (CEPCHGSG), 161–168 (CATCHGRG), 183–190 (CPHCDGRG), and 197–204 (CKTCHGAG).

It belongs to the DnaJ family. In terms of assembly, homodimer. Zn(2+) serves as cofactor.

Its subcellular location is the cytoplasm. Participates actively in the response to hyperosmotic and heat shock by preventing the aggregation of stress-denatured proteins and by disaggregating proteins, also in an autonomous, DnaK-independent fashion. Unfolded proteins bind initially to DnaJ; upon interaction with the DnaJ-bound protein, DnaK hydrolyzes its bound ATP, resulting in the formation of a stable complex. GrpE releases ADP from DnaK; ATP binding to DnaK triggers the release of the substrate protein, thus completing the reaction cycle. Several rounds of ATP-dependent interactions between DnaJ, DnaK and GrpE are required for fully efficient folding. Also involved, together with DnaK and GrpE, in the DNA replication of plasmids through activation of initiation proteins. The chain is Chaperone protein DnaJ from Xanthomonas campestris pv. campestris (strain 8004).